Consider the following 794-residue polypeptide: Zinc finger Y-chromosomal protein 1 (794 aa).

The Nuclear localization signal signature appears at 380 to 389; sequence TKQKLKKKRR. 13 consecutive C2H2-type zinc fingers follow at residues 411–433, 442–464, 477–499, 508–531, 537–559, 565–588, 594–616, 622–645, 651–673, 679–702, 708–730, 736–759, and 765–788; these read YPCM…MKNH, YRCT…LESH, LECE…KLTH, HICK…LAVH, HICV…MRTH, YLCQ…KTKH, FKCD…AILH, HQCL…ISVH, HKCE…EAAH, HQCR…LSVH, YRCK…MKTH, YQCE…ISIH, and HRCD…LKHH.

It belongs to the krueppel C2H2-type zinc-finger protein family. ZFX/ZFY subfamily.

The protein localises to the nucleus. Probable transcriptional activator. This is Zinc finger Y-chromosomal protein 1 (zfy1) from Xenopus laevis (African clawed frog).